We begin with the raw amino-acid sequence, 290 residues long: Elongation factor Ts (290 aa).

The tract at residues 87 to 90 is involved in Mg(2+) ion dislocation from EF-Tu; the sequence is TDFV.

This sequence belongs to the EF-Ts family.

It localises to the cytoplasm. In terms of biological role, associates with the EF-Tu.GDP complex and induces the exchange of GDP to GTP. It remains bound to the aminoacyl-tRNA.EF-Tu.GTP complex up to the GTP hydrolysis stage on the ribosome. The protein is Elongation factor Ts (tsf) of Treponema pallidum (strain Nichols).